We begin with the raw amino-acid sequence, 156 residues long: Transcription factor MafK (156 aa).

Residues 1-21 (MTTNPKPNKALKVKEESGENA) are disordered. Positions 51-76 (RLKQRRRTLKNRGYAASCRIKRVTQK) are basic motif. In terms of domain architecture, bZIP spans 51–114 (RLKQRRRTLK…DALRSKYEAL (64 aa)). A leucine-zipper region spans residues 79–93 (LERQRVELQQEVEKL).

Belongs to the bZIP family. Maf subfamily. As to quaternary structure, homodimer or heterodimer.

The protein localises to the nucleus. Its function is as follows. Since they lack a putative transactivation domain, the small Mafs behave as transcriptional repressors when they dimerize among themselves. However, they act as transcriptional activators by dimerizing with other (usually larger) basic-zipper proteins and recruiting them to specific DNA-binding sites. Small Maf proteins heterodimerize with Fos and may act as competitive repressors of the NF-E2 transcription factor. This chain is Transcription factor MafK (MAFK), found in Gallus gallus (Chicken).